The following is a 363-amino-acid chain: Phosphoserine aminotransferase (363 aa).

Arg46 is a binding site for L-glutamate. Pyridoxal 5'-phosphate-binding positions include 80–81 (AT), Trp106, Thr156, Asp176, and Gln199. Lys200 carries the post-translational modification N6-(pyridoxal phosphate)lysine. 241–242 (NT) contacts pyridoxal 5'-phosphate.

The protein belongs to the class-V pyridoxal-phosphate-dependent aminotransferase family. SerC subfamily. As to quaternary structure, homodimer. Requires pyridoxal 5'-phosphate as cofactor.

Its subcellular location is the cytoplasm. It catalyses the reaction O-phospho-L-serine + 2-oxoglutarate = 3-phosphooxypyruvate + L-glutamate. The enzyme catalyses 4-(phosphooxy)-L-threonine + 2-oxoglutarate = (R)-3-hydroxy-2-oxo-4-phosphooxybutanoate + L-glutamate. It functions in the pathway amino-acid biosynthesis; L-serine biosynthesis; L-serine from 3-phospho-D-glycerate: step 2/3. The protein operates within cofactor biosynthesis; pyridoxine 5'-phosphate biosynthesis; pyridoxine 5'-phosphate from D-erythrose 4-phosphate: step 3/5. Catalyzes the reversible conversion of 3-phosphohydroxypyruvate to phosphoserine and of 3-hydroxy-2-oxo-4-phosphonooxybutanoate to phosphohydroxythreonine. The chain is Phosphoserine aminotransferase from Leptospira interrogans serogroup Icterohaemorrhagiae serovar copenhageni (strain Fiocruz L1-130).